A 109-amino-acid polypeptide reads, in one-letter code: uncharacterized protein (109 aa).

The next 2 helical transmembrane spans lie at 18-38 (TTLA…LLTL) and 48-68 (AGLI…VIAL).

The protein localises to the cell membrane. This is an uncharacterized protein from Mycobacterium tuberculosis (strain CDC 1551 / Oshkosh).